We begin with the raw amino-acid sequence, 510 residues long: GMP synthase [glutamine-hydrolyzing] (510 aa).

Residues Met-5–Asp-195 form the Glutamine amidotransferase type-1 domain. The Nucleophile role is filled by Cys-82. Active-site residues include His-169 and Glu-171. One can recognise a GMPS ATP-PPase domain in the interval Trp-196–Arg-385. Ser-223–Ser-229 contributes to the ATP binding site.

Homodimer.

It carries out the reaction XMP + L-glutamine + ATP + H2O = GMP + L-glutamate + AMP + diphosphate + 2 H(+). Its pathway is purine metabolism; GMP biosynthesis; GMP from XMP (L-Gln route): step 1/1. Functionally, catalyzes the synthesis of GMP from XMP. The sequence is that of GMP synthase [glutamine-hydrolyzing] from Geobacillus kaustophilus (strain HTA426).